Here is a 145-residue protein sequence, read N- to C-terminus: Hemoglobin subunit beta-2 (145 aa).

Residues 2-145 form the Globin domain; the sequence is HLTDQEIKYI…VADAVGKGYH (144 aa). Heme b-binding residues include histidine 63 and histidine 91.

The protein belongs to the globin family. In terms of tissue distribution, red blood cells.

The protein is Hemoglobin subunit beta-2 of Telmatobius peruvianus (Andean frog).